A 61-amino-acid chain; its full sequence is uncharacterized protein (61 aa).

Residues 10-61 (YEEENDNEDFEEEVELSREDLNQIINELAPFLIKLLTDLTELTQKKEESENE) adopt a coiled-coil conformation.

This is an uncharacterized protein from Acidianus bottle-shaped virus (isolate Italy/Pozzuoli) (ABV).